We begin with the raw amino-acid sequence, 630 residues long: 1,4-alpha-glucan branching enzyme GlgB (630 aa).

Asp-311 (nucleophile) is an active-site residue. Glu-362 serves as the catalytic Proton donor.

The protein belongs to the glycosyl hydrolase 13 family. GlgB subfamily. As to quaternary structure, monomer.

It catalyses the reaction Transfers a segment of a (1-&gt;4)-alpha-D-glucan chain to a primary hydroxy group in a similar glucan chain.. It participates in glycan biosynthesis; glycogen biosynthesis. Catalyzes the formation of the alpha-1,6-glucosidic linkages in glycogen by scission of a 1,4-alpha-linked oligosaccharide from growing alpha-1,4-glucan chains and the subsequent attachment of the oligosaccharide to the alpha-1,6 position. The protein is 1,4-alpha-glucan branching enzyme GlgB of Aquifex aeolicus (strain VF5).